Reading from the N-terminus, the 71-residue chain is Small ribosomal subunit protein bS18c (71 aa).

Belongs to the bacterial ribosomal protein bS18 family. As to quaternary structure, part of the 30S ribosomal subunit.

It localises to the plastid. The protein resides in the chloroplast. This is Small ribosomal subunit protein bS18c (rps18) from Mesostigma viride (Green alga).